Here is a 144-residue protein sequence, read N- to C-terminus: Eukaryotic translation initiation factor 1A (144 aa).

The segment covering 1–15 (MPKNKGKGGKNRKRG) has biased composition (basic residues). 2 disordered regions span residues 1 to 25 (MPKN…DKRE) and 120 to 144 (DVDG…IDKI). The span at 16 to 25 (KNEADDDKRE) shows a compositional bias: basic and acidic residues. The S1-like domain occupies 22-96 (DKRELVFKED…DKADVILKYM (75 aa)).

The protein belongs to the eIF-1A family.

Functionally, seems to be required for maximal rate of protein biosynthesis. Enhances ribosome dissociation into subunits and stabilizes the binding of the initiator Met-tRNA(I) to 40 S ribosomal subunits. The sequence is that of Eukaryotic translation initiation factor 1A from Triticum aestivum (Wheat).